The primary structure comprises 152 residues: Large ribosomal subunit protein uL15 (152 aa).

The disordered stretch occupies residues 1-54 (MGLKLNELSPGVGAKKTAHRKGRGIGSGLGKTGGRGVKGQKSRSGSGVRRGFEG). The segment covering 24–37 (GIGSGLGKTGGRGV) has biased composition (gly residues).

It belongs to the universal ribosomal protein uL15 family. Part of the 50S ribosomal subunit.

Its function is as follows. Binds to the 23S rRNA. In Psychrobacter sp. (strain PRwf-1), this protein is Large ribosomal subunit protein uL15.